The chain runs to 319 residues: MALPLELESLTEAISAGMGMGVDENALISTLGKSQKEHRKLFRKASKSFFVEDEERAFEKCHDHFVRHLKLEFSRFNTAVVMWAMHPWERDARLVKKALKKGEEAYNLIVEVSCTRSAEDLLGARKAYHSLFDQSMEEDIASHVHGPQRKLLVGLVSAYRYEGNKVKDDSAKSDAKILAEAVASSGEEAVEKDEVVRILTTRSKLHLQHLYKHFNEIKGSDLLGGVSKSSLLNEALICLLKPALYFSKILDASLNKDADKTTKKWLTRVFVTRADHSDEMNEIKEEYNNLYGETLAQRIQEKIKGNYRDFLLTLLSKSD.

2 Annexin repeats span residues 1-75 (MALP…EFSR) and 86-157 (HPWE…GLVS). The Ca(2+) site is built by Gly19, Gly21, and Glu72. Thr115 is modified (phosphothreonine). Phosphotyrosine occurs at positions 159 and 211. Annexin repeat units follow at residues 169 to 240 (DSAK…ICLL) and 241 to 316 (KPAL…TLLS). Residue Ser277 is modified to Phosphoserine. Residue Tyr287 is modified to Phosphotyrosine.

Belongs to the annexin (TC 1.A.31.1) family. As to expression, expressed mainly in roots and flowers. Lower in stems and leaves.

In terms of biological role, may be involved in osmotic stress and abscisic acid signaling in a calcium-dependent manner. The protein is Annexin D4 (ANN4) of Arabidopsis thaliana (Mouse-ear cress).